The chain runs to 166 residues: Cofilin-2 (166 aa).

An N-acetylalanine modification is found at Ala2. A Phosphoserine modification is found at Ser3. Residues 4–153 (GVTVNDEVIK…KDRSTLGEKL (150 aa)) form the ADF-H domain. The residue at position 6 (Thr6) is a Phosphothreonine. Residues 30-34 (KKRKK) carry the Nuclear localization signal motif.

The protein belongs to the actin-binding proteins ADF family. In terms of assembly, interacts with CSRP3; possibly two molecules of CFL2 can interact with one molecule if CSRP3. In terms of processing, the phosphorylation of Ser-24 may prevent recognition of the nuclear localization signal. Predominantly expressed in skeletal muscle.

Its subcellular location is the nucleus matrix. It localises to the cytoplasm. The protein resides in the cytoskeleton. Functionally, controls reversibly actin polymerization and depolymerization in a pH-sensitive manner. It has the ability to bind G- and F-actin in a 1:1 ratio of cofilin to actin. It is the major component of intranuclear and cytoplasmic actin rods. Required for muscle maintenance. May play a role during the exchange of alpha-actin forms during the early postnatal remodeling of the sarcomere. The sequence is that of Cofilin-2 (Cfl2) from Mus musculus (Mouse).